Consider the following 226-residue polypeptide: uncharacterized protein (226 aa).

Belongs to the IIV-6 350L family.

This is an uncharacterized protein from Invertebrate iridescent virus 3 (IIV-3).